Here is a 509-residue protein sequence, read N- to C-terminus: Monofunctional riboflavin biosynthesis protein RIBA 3, chloroplastic (509 aa).

A chloroplast-targeting transit peptide spans M1–K43. The segment at A44–K302 is inactive DHBP synthase. Residues G125 to D126 and R240 to T244 contribute to the D-ribulose 5-phosphate site. The interval R303–A509 is GTP cyclohydrolase II. GTP is bound at residue R353–E357. Zn(2+)-binding residues include C358, C369, and C371. GTP contacts are provided by residues Q374, E397–R399, and T419. The active-site Proton acceptor; for GTP cyclohydrolase activity is the D431. R433 (nucleophile; for GTP cyclohydrolase activity) is an active-site residue. Positions 454 and 459 each coordinate GTP.

In the N-terminal section; belongs to the DHBP synthase family. This sequence in the C-terminal section; belongs to the GTP cyclohydrolase II family. It depends on Zn(2+) as a cofactor. Expressed in leaves, shoots, roots, flowers and siliques.

The protein localises to the plastid. It is found in the chloroplast. It catalyses the reaction GTP + 4 H2O = 2,5-diamino-6-hydroxy-4-(5-phosphoribosylamino)-pyrimidine + formate + 2 phosphate + 3 H(+). It participates in cofactor biosynthesis; riboflavin biosynthesis; 5-amino-6-(D-ribitylamino)uracil from GTP: step 1/4. Its function is as follows. Involved in riboflavin biosynthesis. Catalyzes the conversion of GTP to 2,5-diamino-6-ribosylamino-4(3H)-pyrimidinone 5'-phosphate (DARP), formate and pyrophosphate. RIBA2 and RIBA3 together are not able to complement the loss of function of RIBA1. The protein is Monofunctional riboflavin biosynthesis protein RIBA 3, chloroplastic (RIBA3) of Arabidopsis thaliana (Mouse-ear cress).